A 309-amino-acid polypeptide reads, in one-letter code: NADH-cytochrome b5 reductase 2 (309 aa).

Residues 3 to 23 traverse the membrane as a helical segment; that stretch reads ILTAPVLIGVSIVVITVLYLF. Residues 48 to 160 enclose the FAD-binding FR-type domain; it reads SVKYPLPLIE…RGPNGLLVYN (113 aa). FAD is bound by residues 140–170 and 179–214; these read DNMK…IRPD and KFKH…VCSL.

Belongs to the flavoprotein pyridine nucleotide cytochrome reductase family. It depends on FAD as a cofactor.

Its subcellular location is the membrane. The enzyme catalyses 2 Fe(III)-[cytochrome b5] + NADH = 2 Fe(II)-[cytochrome b5] + NAD(+) + H(+). Its function is as follows. NADH-cytochrome b5 reductases are involved in desaturation and elongation of fatty acids, cholesterol biosynthesis and drug metabolism. In Danio rerio (Zebrafish), this protein is NADH-cytochrome b5 reductase 2 (cyb5r2).